The chain runs to 172 residues: Protein-export protein SecB (172 aa).

This sequence belongs to the SecB family. Homotetramer, a dimer of dimers. One homotetramer interacts with 1 SecA dimer.

It is found in the cytoplasm. Its function is as follows. One of the proteins required for the normal export of preproteins out of the cell cytoplasm. It is a molecular chaperone that binds to a subset of precursor proteins, maintaining them in a translocation-competent state. It also specifically binds to its receptor SecA. The protein is Protein-export protein SecB of Stenotrophomonas maltophilia (strain K279a).